Here is a 336-residue protein sequence, read N- to C-terminus: Serpentine receptor class alpha-10 (336 aa).

Residues 1 to 28 lie on the Extracellular side of the membrane; sequence MGPITANSSKCATEDQMILQTSLLLRIN. A helical transmembrane segment spans residues 29 to 49; it reads VIIMTIVAIITFILTYKALFI. Topologically, residues 50–61 are cytoplasmic; the sequence is LKIRPIFHSSTK. Residues 62-82 form a helical membrane-spanning segment; that stretch reads ILLYTSLLFVNVHAVIFMVIQ. At 83-107 the chain is on the extracellular side; that stretch reads NTALIRSFTLSDKPCEIMRTTLECR. A helical transmembrane segment spans residues 108–128; that stretch reads FQNHVLIFGIAGVNFNQFGLT. Topologically, residues 129-148 are cytoplasmic; that stretch reads VDRLLATIIPQSYSHMGALP. The helical transmembrane segment at 149 to 169 threads the bilayer; sequence GVILSVLVVACSIAAPLIIAI. Residues 170 to 192 lie on the Extracellular side of the membrane; that stretch reads GDPYDDIVPNCFFFPEHSAPRAN. Residues 193–213 traverse the membrane as a helical segment; that stretch reads IFLVTLSTLVITSIFLNFIII. Over 214-243 the chain is Cytoplasmic; the sequence is YANKKLEKGCRTRFYVTQRYQKREALISTR. Residues 244 to 264 form a helical membrane-spanning segment; that stretch reads IISYIAASQFLGLTLYSTMVL. Over 265–280 the chain is Extracellular; that stretch reads TLRLHKSMIPISIYHN. The chain crosses the membrane as a helical span at residues 281-301; it reads MVWWAYTVPFAAVSLPALLIY. The Cytoplasmic segment spans residues 302–336; it reads RINQVGSNRKRVINRITAKVETQEEHMKSLKELWA.

Belongs to the nematode receptor-like protein sra family. In terms of tissue distribution, expressed in the URX sensory neuron, the ALA interneuron and in additional interneurons, pharyngeal neurons and muscle.

The protein resides in the membrane. In Caenorhabditis elegans, this protein is Serpentine receptor class alpha-10 (sra-10).